We begin with the raw amino-acid sequence, 258 residues long: Flap endonuclease Xni (258 aa).

Position 109 (Asp-109) interacts with Mg(2+). The 5'-3' exonuclease domain occupies 165-254 (VKPEQLPDYW…GFNLQDIRYL (90 aa)). Leu-176, Ala-177, Pro-185, Ile-187, and Ile-190 together coordinate K(+). The interval 189-194 (GIGPKA) is interaction with DNA.

It belongs to the Xni family. Mg(2+) is required as a cofactor. K(+) serves as cofactor.

In terms of biological role, has flap endonuclease activity. During DNA replication, flap endonucleases cleave the 5'-overhanging flap structure that is generated by displacement synthesis when DNA polymerase encounters the 5'-end of a downstream Okazaki fragment. The sequence is that of Flap endonuclease Xni from Photobacterium profundum (strain SS9).